The sequence spans 236 residues: LexA repressor (236 aa).

The H-T-H motif DNA-binding region spans 26 to 46; that stretch reads FDEMKEALDLASKSGIHRLIT. The tract at residues 84–107 is disordered; it reads SPSVIEGGQGRSSPAPRPAANNDD. Active-site for autocatalytic cleavage activity residues include serine 157 and lysine 195.

It belongs to the peptidase S24 family. As to quaternary structure, homodimer.

It carries out the reaction Hydrolysis of Ala-|-Gly bond in repressor LexA.. Its function is as follows. Represses a number of genes involved in the response to DNA damage (SOS response), including recA and lexA. In the presence of single-stranded DNA, RecA interacts with LexA causing an autocatalytic cleavage which disrupts the DNA-binding part of LexA, leading to derepression of the SOS regulon and eventually DNA repair. The chain is LexA repressor from Chelativorans sp. (strain BNC1).